The chain runs to 205 residues: Small ribosomal subunit protein uS4 (205 aa).

The segment at 18 to 49 (NIWGRPKSPVNKREYGPGQHGQRRKGKLSDFG) is disordered. In terms of domain architecture, S4 RNA-binding spans 94 to 157 (RRLDTVVYRA…KQLALVLEAN (64 aa)).

The protein belongs to the universal ribosomal protein uS4 family. As to quaternary structure, part of the 30S ribosomal subunit. Contacts protein S5. The interaction surface between S4 and S5 is involved in control of translational fidelity.

Its function is as follows. One of the primary rRNA binding proteins, it binds directly to 16S rRNA where it nucleates assembly of the body of the 30S subunit. With S5 and S12 plays an important role in translational accuracy. The sequence is that of Small ribosomal subunit protein uS4 from Nitrobacter winogradskyi (strain ATCC 25391 / DSM 10237 / CIP 104748 / NCIMB 11846 / Nb-255).